The sequence spans 104 residues: Large ribosomal subunit protein bL21 (104 aa).

It belongs to the bacterial ribosomal protein bL21 family. Part of the 50S ribosomal subunit. Contacts protein L20.

Functionally, this protein binds to 23S rRNA in the presence of protein L20. In Streptococcus pneumoniae serotype 2 (strain D39 / NCTC 7466), this protein is Large ribosomal subunit protein bL21.